The chain runs to 585 residues: Serine/threonine-protein kinase Nek3 (585 aa).

Residues 4–258 enclose the Protein kinase domain; that stretch reads YEVLEQIGKG…AAELLKHPHL (255 aa). ATP is bound by residues 10–18 and Lys33; that span reads IGKGSFGSA. Asp129 acts as the Proton acceptor in catalysis. 2 disordered regions span residues 354–413 and 489–511; these read GNHS…TPVN and DSSKNHTGDSSDPSILGTDSNPL. Polar residues-rich tracts occupy residues 400 to 413 and 498 to 511; these read RASQPTRRASTPVN and SSDPSILGTDSNPL.

The protein belongs to the protein kinase superfamily. NEK Ser/Thr protein kinase family. NIMA subfamily. In terms of assembly, interacts with PLIM2B. As to expression, expressed in pollen grains.

It carries out the reaction L-seryl-[protein] + ATP = O-phospho-L-seryl-[protein] + ADP + H(+). The enzyme catalyses L-threonyl-[protein] + ATP = O-phospho-L-threonyl-[protein] + ADP + H(+). Its function is as follows. May be involved in plant development processes. May function downstream of DCW11 in retrograde signaling from the mitochondria to the nucleus. Seems to be involved in the mechanism of cytoplasmic male sterility (CMS) occurrence. The polypeptide is Serine/threonine-protein kinase Nek3 (Oryza sativa subsp. japonica (Rice)).